The sequence spans 458 residues: Ammonium transporter Rh type B (458 aa).

At 1–13 (MAGSPSRAAGRRL) the chain is on the cytoplasmic side. Residues 14–34 (QLPLLCLFLQGATAVLFAVFV) form a helical membrane-spanning segment. The Extracellular portion of the chain corresponds to 35 to 61 (RYNHKTDAALWHRGNYSNADNEFYFRY). N-linked (GlcNAc...) asparagine glycosylation is present at Asn-49. Residues 62–82 (PSFQDVHAMVFVGFGFLMVFL) traverse the membrane as a helical segment. Topologically, residues 83–86 (QRYG) are cytoplasmic. A helical transmembrane segment spans residues 87-107 (FSSVGFTFLLAAFALQWSTLV). Topologically, residues 108–124 (QGFLHSFHSGHIHVGVE) are extracellular. The chain crosses the membrane as a helical span at residues 125–145 (SMINADFCAGAVLISFGAVLG). Residues 146–149 (KTGP) are Cytoplasmic-facing. A helical transmembrane segment spans residues 150–170 (AQLLLMALLEVVLFGINEFVL). Topologically, residues 171 to 178 (LHLLGVRD) are extracellular. Residues 179–201 (AGGSMTIHTFGAYFGLVLSRVLY) traverse the membrane as a helical segment. The Cytoplasmic segment spans residues 202 to 219 (RPQLEKSKHRQGSVYHSD). The helical transmembrane segment at 220-240 (LFAMIGTIFLWIFWPSFNSAL) threads the bilayer. Residues 241–251 (TALGAGQHRTA) lie on the Extracellular side of the membrane. The chain crosses the membrane as a helical span at residues 252–272 (LNTYYSLAASTLGTFALSALV). Over 273–282 (GEDGRLDMVH) the chain is Cytoplasmic. The helical transmembrane segment at 283 to 303 (IQNAALAGGVVVGTSSEMMLT) threads the bilayer. Pro-304 is a topological domain (extracellular). The helical transmembrane segment at 305–325 (FGALAAGFLAGTVSTLGYKFF) threads the bilayer. Topologically, residues 326-346 (TPILESKFKVQDTCGVHNLHG) are cytoplasmic. A helical transmembrane segment spans residues 347 to 367 (MPGVLGALLGVLVAGLATHEA). Over 368–393 (YGDGLESVFPLIAEGQRSATSQAMLQ) the chain is Extracellular. The helical transmembrane segment at 394-414 (LFGLFVTLMFASVGGGLGGLL) threads the bilayer. Residues 415-458 (LKLPFLDSPPDSQCYEDQVHWQVPGEHEDEAQRPLRVEEADTQA) are Cytoplasmic-facing. Positions 416–424 (KLPFLDSPP) are interaction with ANK3. The Basolateral sorting signal signature appears at 429-432 (YEDQ). A disordered region spans residues 439–458 (GEHEDEAQRPLRVEEADTQA). Positions 444–458 (EAQRPLRVEEADTQA) are enriched in basic and acidic residues.

The protein belongs to the ammonium transporter (TC 2.A.49) family. Rh subfamily. Interacts (via C-terminus) with ANK2 and ANK3; required for targeting to the basolateral membrane. In terms of processing, N-glycosylated.

It localises to the cell membrane. The protein resides in the basolateral cell membrane. It catalyses the reaction NH4(+)(in) = NH4(+)(out). The enzyme catalyses methylamine(out) = methylamine(in). It carries out the reaction CO2(out) = CO2(in). In terms of biological role, ammonium transporter involved in the maintenance of acid-base homeostasis. Transports ammonium and its related derivative methylammonium across the basolateral plasma membrane of epithelial cells likely contributing to renal transepithelial ammonia transport and ammonia metabolism. May transport either NH4(+) or NH3 ammonia species predominantly mediating an electrogenic NH4(+) transport. May act as a CO2 channel providing for renal acid secretion. In Papio hamadryas (Hamadryas baboon), this protein is Ammonium transporter Rh type B (RHBG).